The chain runs to 486 residues: N-succinylglutamate 5-semialdehyde dehydrogenase (486 aa).

220-225 is an NAD(+) binding site; the sequence is GSSRTG. Residues Glu243 and Cys277 contribute to the active site.

It belongs to the aldehyde dehydrogenase family. AstD subfamily.

It carries out the reaction N-succinyl-L-glutamate 5-semialdehyde + NAD(+) + H2O = N-succinyl-L-glutamate + NADH + 2 H(+). The protein operates within amino-acid degradation; L-arginine degradation via AST pathway; L-glutamate and succinate from L-arginine: step 4/5. Catalyzes the NAD-dependent reduction of succinylglutamate semialdehyde into succinylglutamate. The chain is N-succinylglutamate 5-semialdehyde dehydrogenase from Shewanella putrefaciens (strain CN-32 / ATCC BAA-453).